The sequence spans 554 residues: Glutamine--tRNA ligase (554 aa).

The 'HIGH' region signature appears at 34-44; sequence PEPNGYLHIGH. ATP contacts are provided by residues 35-37 and 41-47; these read EPN and HIGHAKS. Residues aspartate 67 and tyrosine 212 each contribute to the L-glutamine site. Residues threonine 231, 261–262, and 269–271 each bind ATP; these read RL and MSK. The 'KMSKS' region motif lies at 268–272; that stretch reads VMSKR. The segment at 317-324 is interaction with tRNA; sequence TKQDNTIE.

Belongs to the class-I aminoacyl-tRNA synthetase family. As to quaternary structure, monomer.

Its subcellular location is the cytoplasm. The enzyme catalyses tRNA(Gln) + L-glutamine + ATP = L-glutaminyl-tRNA(Gln) + AMP + diphosphate. In Escherichia coli O17:K52:H18 (strain UMN026 / ExPEC), this protein is Glutamine--tRNA ligase.